The following is a 234-amino-acid chain: Transmembrane protein 65 (234 aa).

The N-terminal 55 residues, 1-55, are a transit peptide targeting the mitochondrion; that stretch reads MSRLLPLLGSRTARSLRPGPAAAPRLPSWCCCGRGLLALGVPGGPRLLGTHPKKE. The Cytoplasmic portion of the chain corresponds to 56-110; sequence PMEALNTAQGARDFIYSLHSTERSCLLKELHRFESIAIAQEKLEALPPTPGQLRY. The helical transmembrane segment at 111-131 threads the bilayer; sequence VFFHNAIPFVGFGFLDNAIMI. The Extracellular portion of the chain corresponds to 132-138; it reads VAGTQIE. The helical transmembrane segment at 139 to 159 threads the bilayer; it reads LSIGIILGISTMAAAALGNLV. The Cytoplasmic segment spans residues 160–203; the sequence is SDLAGLGLAGYVEALASRLGLSIPDLTPKQVDMWQTRVSTHLGK. The helical transmembrane segment at 204-224 threads the bilayer; sequence AVGVTIGCILGMFPLIFFGGS. The Extracellular segment spans residues 225-234; that stretch reads EEDEKLETTN.

Monomer. Homodimer. Interacts with GJA1. Interacts weakly with DSP. Interacts with SCN1B. In terms of tissue distribution, predominantly expressed in the ventricular tissue (at protein level).

Its subcellular location is the cell membrane. It is found in the mitochondrion inner membrane. In terms of biological role, essential for maintaining proper cardiac intercalated disk (ICD) structure and function as well as cardiac conduction velocity in the heart. Its association with SCN1B is required for stabilizing the perinexus in the ICD and for localization of GJA1 and SCN5A to the ICD. May regulate the function of the gap junction protein GJA1 and may contribute to the stability and proper localization of GJA1 to cardiac intercalated disk thereby regulating gap junction communication. Regulates mitochondrial respiration and mitochondrial DNA copy number maintenance. This is Transmembrane protein 65 (Tmem65) from Mus musculus (Mouse).